Here is a 428-residue protein sequence, read N- to C-terminus: Histone-lysine N-methyltransferase SMYD3 (428 aa).

Position 1 is an N-acetylmethionine (Met-1). One can recognise an SET domain in the interval 4 to 240 (LKVEKFTTAN…AGEELTICYL (237 aa)). 14-16 (RGN) is a binding site for S-adenosyl-L-methionine. Positions 49, 52, 62, 65, 71, 75, 83, and 87 each coordinate Zn(2+). The segment at 49 to 87 (CDRCLLGKEKLMRCSQCRIAKYCSAKCQKKAWPDHRREC) adopts an MYND-type zinc-finger fold. Residues Tyr-124, Asn-132, 205 to 206 (NH), Tyr-239, and Phe-259 each bind S-adenosyl-L-methionine. Residues 272-428 (DADMLTGDEQ…EECDANIRAS (157 aa)) form a C-terminal domain; essential for histone methyltransferase activity, nuclear localization and mediates interaction with HSP90AA1 region.

This sequence belongs to the class V-like SAM-binding methyltransferase superfamily. Histone-lysine methyltransferase family. In terms of assembly, interacts with HSPCA. Interacts with HELZ. Interacts with POLR2A; the interaction may be indirect and may be mediated by HELZ. Interacts with HSP90AA1; this interaction enhances SMYD3 histone-lysine N-methyltransferase.

The protein localises to the cytoplasm. The protein resides in the nucleus. The catalysed reaction is L-lysyl(4)-[histone H3] + 3 S-adenosyl-L-methionine = N(6),N(6),N(6)-trimethyl-L-lysyl(4)-[histone H3] + 3 S-adenosyl-L-homocysteine + 3 H(+). With respect to regulation, histone methyltransferase activity strongly stimulated by HSPCA. Histone methyltransferase. Specifically methylates 'Lys-4' of histone H3, inducing di- and tri-methylation, but not monomethylation. Also methylates 'Lys-5' of histone H4. Plays an important role in transcriptional activation as a member of an RNA polymerase complex. Binds DNA containing 5'-CCCTCC-3' or 5'-GAGGGG-3' sequences. This chain is Histone-lysine N-methyltransferase SMYD3 (Smyd3), found in Mus musculus (Mouse).